The sequence spans 215 residues: MOB kinase activator-like 1A (215 aa).

The tract at residues methionine 1–leucine 29 is disordered. Zn(2+)-binding residues include cysteine 80, cysteine 85, histidine 162, and histidine 167.

It belongs to the MOB1/phocein family. In terms of tissue distribution, isoform 1 is constitutively expressed. Isoform 2 is specifically expressed in flowers bud during sporogenesis and gametogenesis.

It is found in the cytoplasm. Its subcellular location is the cytoskeleton. The protein resides in the phragmoplast. The protein is MOB kinase activator-like 1A of Medicago sativa subsp. falcata (Sickle medic).